A 2293-amino-acid chain; its full sequence is Protein Ycf2 (2293 aa).

ATP is bound at residue 1642-1649 (GSIGTGRS).

This sequence belongs to the Ycf2 family.

The protein resides in the plastid. It localises to the chloroplast stroma. Its function is as follows. Probable ATPase of unknown function. Its presence in a non-photosynthetic plant (Epifagus virginiana) and experiments in tobacco indicate that it has an essential function which is probably not related to photosynthesis. The protein is Protein Ycf2 of Platanus occidentalis (Sycamore).